The sequence spans 356 residues: Nitrilase, arylacetone-specific (356 aa).

Positions 7-280 (VRAAAVQAAS…EGLIIADLNM (274 aa)) constitute a CN hydrolase domain. The active-site Proton acceptor is the glutamate 47. Residue lysine 129 is the Proton donor of the active site. The Nucleophile role is filled by cysteine 163. Residues 324–356 (QEEAPEPHVQSTAAPVAVSQTQDSDTLLVQEPS) form a disordered region. Over residues 332–356 (VQSTAAPVAVSQTQDSDTLLVQEPS) the composition is skewed to polar residues.

It belongs to the carbon-nitrogen hydrolase superfamily. Nitrilase family. In terms of assembly, homohexamer.

It catalyses the reaction a nitrile + 2 H2O = a carboxylate + NH4(+). Its function is as follows. Nitrilase that acts mostly on arylacetonitriles. The chain is Nitrilase, arylacetone-specific from Alcaligenes faecalis.